The following is a 306-amino-acid chain: Methionyl-tRNA formyltransferase (306 aa).

105–108 (SLLP) is a binding site for (6S)-5,6,7,8-tetrahydrofolate.

Belongs to the Fmt family.

It catalyses the reaction L-methionyl-tRNA(fMet) + (6R)-10-formyltetrahydrofolate = N-formyl-L-methionyl-tRNA(fMet) + (6S)-5,6,7,8-tetrahydrofolate + H(+). In terms of biological role, attaches a formyl group to the free amino group of methionyl-tRNA(fMet). The formyl group appears to play a dual role in the initiator identity of N-formylmethionyl-tRNA by promoting its recognition by IF2 and preventing the misappropriation of this tRNA by the elongation apparatus. The protein is Methionyl-tRNA formyltransferase of Rubrobacter xylanophilus (strain DSM 9941 / JCM 11954 / NBRC 16129 / PRD-1).